The following is a 152-amino-acid chain: Putative membrane protein insertion efficiency factor (152 aa).

A disordered region spans residues 81 to 152; that stretch reads AAGGYDPVPG…IVGSGRGPWV (72 aa).

It belongs to the UPF0161 family.

It localises to the cell membrane. Could be involved in insertion of integral membrane proteins into the membrane. The protein is Putative membrane protein insertion efficiency factor of Frankia casuarinae (strain DSM 45818 / CECT 9043 / HFP020203 / CcI3).